The sequence spans 350 residues: Probable choline kinase 2 (350 aa).

3 residues coordinate ATP: R73, Q210, and D227.

Belongs to the choline/ethanolamine kinase family.

It catalyses the reaction choline + ATP = phosphocholine + ADP + H(+). The protein operates within phospholipid metabolism; phosphatidylcholine biosynthesis; phosphocholine from choline: step 1/1. Its function is as follows. Involved in phospholipid biosynthesis. Catalyzes the first step in phosphatidylcholine biosynthesis. The sequence is that of Probable choline kinase 2 from Arabidopsis thaliana (Mouse-ear cress).